Consider the following 35-residue polypeptide: Photosystem II reaction center protein M (35 aa).

The helical transmembrane segment at 7 to 27 (GFLASLLFVLVPSVFLIVLYI) threads the bilayer.

This sequence belongs to the PsbM family. As to quaternary structure, PSII is composed of 1 copy each of membrane proteins PsbA, PsbB, PsbC, PsbD, PsbE, PsbF, PsbH, PsbI, PsbJ, PsbK, PsbL, PsbM, PsbT, PsbX, PsbY, PsbZ, Psb30/Ycf12, peripheral proteins PsbO, CyanoQ (PsbQ), PsbU, PsbV and a large number of cofactors. It forms dimeric complexes.

The protein localises to the cellular thylakoid membrane. Functionally, one of the components of the core complex of photosystem II (PSII). PSII is a light-driven water:plastoquinone oxidoreductase that uses light energy to abstract electrons from H(2)O, generating O(2) and a proton gradient subsequently used for ATP formation. It consists of a core antenna complex that captures photons, and an electron transfer chain that converts photonic excitation into a charge separation. This subunit is found at the monomer-monomer interface. The sequence is that of Photosystem II reaction center protein M from Synechococcus elongatus (strain ATCC 33912 / PCC 7942 / FACHB-805) (Anacystis nidulans R2).